We begin with the raw amino-acid sequence, 208 residues long: Ribosome maturation factor RimP (208 aa).

This sequence belongs to the RimP family.

The protein localises to the cytoplasm. Required for maturation of 30S ribosomal subunits. The protein is Ribosome maturation factor RimP of Bartonella tribocorum (strain CIP 105476 / IBS 506).